Reading from the N-terminus, the 456-residue chain is Bifunctional protein GlmU (456 aa).

Positions 1-228 (MKLKAIILAA…YEDIMAVNSR (228 aa)) are pyrophosphorylase. UDP-N-acetyl-alpha-D-glucosamine is bound by residues 8–11 (LAAG), Lys-22, Gln-72, 77–78 (GT), 99–101 (YGD), Gly-138, Glu-153, Asn-168, and Asn-226. Position 101 (Asp-101) interacts with Mg(2+). Asn-226 is a Mg(2+) binding site. The linker stretch occupies residues 229-249 (EQLAEVEEVMQRRIVKKHMEA). The N-acetyltransferase stretch occupies residues 250-456 (GVTFIDPQST…WVARKGVGKK (207 aa)). Arg-331 and Lys-349 together coordinate UDP-N-acetyl-alpha-D-glucosamine. The active-site Proton acceptor is His-361. UDP-N-acetyl-alpha-D-glucosamine contacts are provided by Tyr-364 and Asn-375. Residues 384-385 (NY), Ser-403, Ser-421, and Arg-438 contribute to the acetyl-CoA site.

In the N-terminal section; belongs to the N-acetylglucosamine-1-phosphate uridyltransferase family. The protein in the C-terminal section; belongs to the transferase hexapeptide repeat family. In terms of assembly, homotrimer. It depends on Mg(2+) as a cofactor.

It localises to the cytoplasm. It catalyses the reaction alpha-D-glucosamine 1-phosphate + acetyl-CoA = N-acetyl-alpha-D-glucosamine 1-phosphate + CoA + H(+). It carries out the reaction N-acetyl-alpha-D-glucosamine 1-phosphate + UTP + H(+) = UDP-N-acetyl-alpha-D-glucosamine + diphosphate. Its pathway is nucleotide-sugar biosynthesis; UDP-N-acetyl-alpha-D-glucosamine biosynthesis; N-acetyl-alpha-D-glucosamine 1-phosphate from alpha-D-glucosamine 6-phosphate (route II): step 2/2. The protein operates within nucleotide-sugar biosynthesis; UDP-N-acetyl-alpha-D-glucosamine biosynthesis; UDP-N-acetyl-alpha-D-glucosamine from N-acetyl-alpha-D-glucosamine 1-phosphate: step 1/1. It functions in the pathway bacterial outer membrane biogenesis; LPS lipid A biosynthesis. Functionally, catalyzes the last two sequential reactions in the de novo biosynthetic pathway for UDP-N-acetylglucosamine (UDP-GlcNAc). The C-terminal domain catalyzes the transfer of acetyl group from acetyl coenzyme A to glucosamine-1-phosphate (GlcN-1-P) to produce N-acetylglucosamine-1-phosphate (GlcNAc-1-P), which is converted into UDP-GlcNAc by the transfer of uridine 5-monophosphate (from uridine 5-triphosphate), a reaction catalyzed by the N-terminal domain. In Alkaliphilus metalliredigens (strain QYMF), this protein is Bifunctional protein GlmU.